The chain runs to 233 residues: MADS-box transcription factor 56 (233 aa).

Positions 1–61 (MVRGRTELKR…GRLYEFASAP (61 aa)) constitute an MADS-box domain. In terms of domain architecture, K-box spans 87–177 (IQQVKDDTLG…RGKHRNLEAA (91 aa)).

The protein resides in the nucleus. In terms of biological role, probable transcription factor. This chain is MADS-box transcription factor 56 (MADS56), found in Oryza sativa subsp. indica (Rice).